The sequence spans 151 residues: D-aminoacyl-tRNA deacylase (151 aa).

Residues 136–137 carry the Gly-cisPro motif, important for rejection of L-amino acids motif; that stretch reads GP.

Belongs to the DTD family. Homodimer.

The protein resides in the cytoplasm. It catalyses the reaction glycyl-tRNA(Ala) + H2O = tRNA(Ala) + glycine + H(+). The enzyme catalyses a D-aminoacyl-tRNA + H2O = a tRNA + a D-alpha-amino acid + H(+). An aminoacyl-tRNA editing enzyme that deacylates mischarged D-aminoacyl-tRNAs. Also deacylates mischarged glycyl-tRNA(Ala), protecting cells against glycine mischarging by AlaRS. Acts via tRNA-based rather than protein-based catalysis; rejects L-amino acids rather than detecting D-amino acids in the active site. By recycling D-aminoacyl-tRNA to D-amino acids and free tRNA molecules, this enzyme counteracts the toxicity associated with the formation of D-aminoacyl-tRNA entities in vivo and helps enforce protein L-homochirality. The polypeptide is D-aminoacyl-tRNA deacylase (Lactococcus lactis subsp. lactis (strain IL1403) (Streptococcus lactis)).